We begin with the raw amino-acid sequence, 132 residues long: MPNNYRIAKISSLLKKEITLILQNDLENDLLRSNFINISKIELSGDLQFCKIYITSTAEEAIRKEIVEELNLAKTYIRHTLGQRIEMRRVPEMTFKDDTVLEKGLSVLKLLAELKNKKHNQDSKVEGNNKNV.

This sequence belongs to the RbfA family. As to quaternary structure, monomer. Binds 30S ribosomal subunits, but not 50S ribosomal subunits or 70S ribosomes.

Its subcellular location is the cytoplasm. One of several proteins that assist in the late maturation steps of the functional core of the 30S ribosomal subunit. Associates with free 30S ribosomal subunits (but not with 30S subunits that are part of 70S ribosomes or polysomes). Required for efficient processing of 16S rRNA. May interact with the 5'-terminal helix region of 16S rRNA. This chain is Ribosome-binding factor A, found in Prochlorococcus marinus subsp. pastoris (strain CCMP1986 / NIES-2087 / MED4).